The sequence spans 334 residues: Ribonucleoside-diphosphate reductase small chain (334 aa).

Residues D77, E108, and H111 each coordinate Fe cation. Residue Y115 is part of the active site. Fe cation is bound by residues E171, E205, and H208.

It belongs to the ribonucleoside diphosphate reductase small chain family. In terms of assembly, heterotetramer composed of a homodimer of the large subunit (R1) and a homodimer of the small subunit (R2). Larger multisubunit protein complex are also active, composed of (R1)n(R2)n. Fe cation serves as cofactor.

It catalyses the reaction a 2'-deoxyribonucleoside 5'-diphosphate + [thioredoxin]-disulfide + H2O = a ribonucleoside 5'-diphosphate + [thioredoxin]-dithiol. Its function is as follows. Ribonucleoside-diphosphate reductase holoenzyme provides the precursors necessary for viral DNA synthesis. Allows virus growth in non-dividing cells. Catalyzes the biosynthesis of deoxyribonucleotides from the corresponding ribonucleotides. The protein is Ribonucleoside-diphosphate reductase small chain of Ornithodoros (relapsing fever ticks).